We begin with the raw amino-acid sequence, 429 residues long: Trigger factor (429 aa).

The region spanning 164–249 is the PPIase FKBP-type domain; it reads GDTAVIDFEG…VKEVKTKVLP (86 aa).

This sequence belongs to the FKBP-type PPIase family. Tig subfamily.

It is found in the cytoplasm. The catalysed reaction is [protein]-peptidylproline (omega=180) = [protein]-peptidylproline (omega=0). Its function is as follows. Involved in protein export. Acts as a chaperone by maintaining the newly synthesized protein in an open conformation. Functions as a peptidyl-prolyl cis-trans isomerase. This Lysinibacillus sphaericus (strain C3-41) protein is Trigger factor.